A 126-amino-acid chain; its full sequence is C-type natriuretic peptide (126 aa).

The first 23 residues, Met1 to Ala23, serve as a signal peptide directing secretion. The interval Pro20–Leu71 is disordered. The propeptide occupies Lys24–Arg73. The segment covering Gly26–Pro35 has biased composition (pro residues). The span at Ala46 to Ala62 shows a compositional bias: gly residues. Cys110 and Cys126 are oxidised to a cystine.

The protein belongs to the natriuretic peptide family. Degraded by IDE (in vitro).

It is found in the secreted. Functionally, hormone which plays a role in endochondral ossification through regulation of cartilaginous growth plate chondrocytes proliferation and differentiation. May also be vasoactive and natriuretic. Acts by specifically binding and stimulating NPR2 to produce cGMP. Binds the clearance receptor NPR3. The sequence is that of C-type natriuretic peptide (NPPC) from Ovis aries (Sheep).